A 265-amino-acid chain; its full sequence is uncharacterized protein (265 aa).

It localises to the mitochondrion. This is an uncharacterized protein from Paramecium tetraurelia.